The sequence spans 545 residues: Zinc finger protein with KRAB and SCAN domains 4 (545 aa).

Positions 1-22 are disordered; it reads MAREPRKNAALDAQSAEDQTGL. Glycyl lysine isopeptide (Lys-Gly) (interchain with G-Cter in SUMO2) cross-links involve residues Lys-26 and Lys-29. The disordered stretch occupies residues 34 to 55; it reads ALTAEVRAPCSPARGPERSRQR. Residues 53–135 enclose the SCAN box domain; the sequence is RQRFRGFRYP…VLLEYLERQL (83 aa). Glycyl lysine isopeptide (Lys-Gly) (interchain with G-Cter in SUMO2) cross-links involve residues Lys-178 and Lys-222. Residues 221-317 form the KRAB domain; it reads LKMEDVALTL…QRKQKNAIGS (97 aa). 5 C2H2-type zinc fingers span residues 320-342, 348-370, 376-398, 404-426, and 432-454; these read HYCH…RRIH, YECE…QRVH, YECE…QRTH, YECD…HKIH, and YQCN…QRIH. Residues 455–467 are compositionally biased toward basic and acidic residues; that stretch reads GDKNVQNPEHGES. Residues 455 to 480 form a disordered region; it reads GDKNVQNPEHGESWESQGRTESQWEN. Over residues 468–480 the composition is skewed to polar residues; sequence WESQGRTESQWEN. 2 C2H2-type zinc fingers span residues 487–509 and 515–537; these read YKCN…QKIH and YQCD…QRSH.

This sequence belongs to the krueppel C2H2-type zinc-finger protein family. In terms of tissue distribution, expressed in adult heart, brain, placenta, lung and kidney, but not in adult liver and skeletal muscle. In 17-day old embryo, detected in liver, skeletal muscle, brain, heart and small intestine.

The protein localises to the nucleus. May be involved in the transcriptional activation of MDM2 and EP300 genes. The sequence is that of Zinc finger protein with KRAB and SCAN domains 4 (ZKSCAN4) from Homo sapiens (Human).